A 376-amino-acid polypeptide reads, in one-letter code: Succinyl-diaminopimelate desuccinylase (376 aa).

Histidine 66 contacts Zn(2+). The active site involves aspartate 68. Residue aspartate 99 coordinates Zn(2+). Glutamate 133 functions as the Proton acceptor in the catalytic mechanism. Zn(2+) is bound by residues glutamate 134, glutamate 162, and histidine 348.

The protein belongs to the peptidase M20A family. DapE subfamily. As to quaternary structure, homodimer. Zn(2+) serves as cofactor. Co(2+) is required as a cofactor.

It catalyses the reaction N-succinyl-(2S,6S)-2,6-diaminopimelate + H2O = (2S,6S)-2,6-diaminopimelate + succinate. Its pathway is amino-acid biosynthesis; L-lysine biosynthesis via DAP pathway; LL-2,6-diaminopimelate from (S)-tetrahydrodipicolinate (succinylase route): step 3/3. In terms of biological role, catalyzes the hydrolysis of N-succinyl-L,L-diaminopimelic acid (SDAP), forming succinate and LL-2,6-diaminopimelate (DAP), an intermediate involved in the bacterial biosynthesis of lysine and meso-diaminopimelic acid, an essential component of bacterial cell walls. The sequence is that of Succinyl-diaminopimelate desuccinylase from Xanthomonas euvesicatoria pv. vesicatoria (strain 85-10) (Xanthomonas campestris pv. vesicatoria).